The primary structure comprises 326 residues: Type II methyltransferase M.CviAII (326 aa).

It belongs to the N(4)/N(6)-methyltransferase family.

The enzyme catalyses a 2'-deoxyadenosine in DNA + S-adenosyl-L-methionine = an N(6)-methyl-2'-deoxyadenosine in DNA + S-adenosyl-L-homocysteine + H(+). In terms of biological role, an alpha subtype methylase that recognizes the double-stranded sequence 5'-CATG-3', methylates A-2 on both strands and protects the DNA from cleavage by the CviAII endonuclease. This is Type II methyltransferase M.CviAII (CVIAIIM) from Paramecium bursaria Chlorella virus 1 (PBCV-1).